The primary structure comprises 443 residues: ATP-dependent protease ATPase subunit HslU (443 aa).

Residues I18 and G60–E65 contribute to the ATP site. The interval A139–K161 is disordered. D256, E321, and R393 together coordinate ATP.

Belongs to the ClpX chaperone family. HslU subfamily. As to quaternary structure, a double ring-shaped homohexamer of HslV is capped on each side by a ring-shaped HslU homohexamer. The assembly of the HslU/HslV complex is dependent on binding of ATP.

The protein localises to the cytoplasm. ATPase subunit of a proteasome-like degradation complex; this subunit has chaperone activity. The binding of ATP and its subsequent hydrolysis by HslU are essential for unfolding of protein substrates subsequently hydrolyzed by HslV. HslU recognizes the N-terminal part of its protein substrates and unfolds these before they are guided to HslV for hydrolysis. The sequence is that of ATP-dependent protease ATPase subunit HslU from Nitrosomonas eutropha (strain DSM 101675 / C91 / Nm57).